Reading from the N-terminus, the 265-residue chain is Phosphatidylserine decarboxylase proenzyme (265 aa).

S183 serves as the catalytic Schiff-base intermediate with substrate; via pyruvic acid. At S183 the chain carries Pyruvic acid (Ser); by autocatalysis. The tract at residues 218–242 is disordered; it reads PQIESEPESEPALQTAPVETAANPS.

The protein belongs to the phosphatidylserine decarboxylase family. PSD-A subfamily. As to quaternary structure, heterodimer of a large membrane-associated beta subunit and a small pyruvoyl-containing alpha subunit. It depends on pyruvate as a cofactor. Is synthesized initially as an inactive proenzyme. Formation of the active enzyme involves a self-maturation process in which the active site pyruvoyl group is generated from an internal serine residue via an autocatalytic post-translational modification. Two non-identical subunits are generated from the proenzyme in this reaction, and the pyruvate is formed at the N-terminus of the alpha chain, which is derived from the carboxyl end of the proenzyme. The post-translation cleavage follows an unusual pathway, termed non-hydrolytic serinolysis, in which the side chain hydroxyl group of the serine supplies its oxygen atom to form the C-terminus of the beta chain, while the remainder of the serine residue undergoes an oxidative deamination to produce ammonia and the pyruvoyl prosthetic group on the alpha chain.

The protein localises to the cell membrane. The enzyme catalyses a 1,2-diacyl-sn-glycero-3-phospho-L-serine + H(+) = a 1,2-diacyl-sn-glycero-3-phosphoethanolamine + CO2. It participates in phospholipid metabolism; phosphatidylethanolamine biosynthesis; phosphatidylethanolamine from CDP-diacylglycerol: step 2/2. Catalyzes the formation of phosphatidylethanolamine (PtdEtn) from phosphatidylserine (PtdSer). In Neisseria meningitidis serogroup C (strain 053442), this protein is Phosphatidylserine decarboxylase proenzyme.